The primary structure comprises 896 residues: Cytokine receptor common subunit beta (896 aa).

The signal sequence occupies residues 1 to 22 (MDQQMALTWGLCYMALVALCWG). Residues 23–441 (HGVTEAEETV…SEEYTWKTDW (419 aa)) lie on the Extracellular side of the membrane. Cys-39 and Cys-49 are joined by a disulfide. An N-linked (GlcNAc...) asparagine glycan is attached at Asn-62. Disulfide bonds link Cys-77–Cys-99 and Cys-88–Cys-94. Positions 136–243 (PPLPKNVSIS…PEVHWDSQPG (108 aa)) constitute a Fibronectin type-III 1 domain. Asn-141 carries N-linked (GlcNAc...) asparagine glycosylation. Residues 220-233 (SPGSSLSGRPSRWS) show a composition bias toward low complexity. The tract at residues 220–243 (SPGSSLSGRPSRWSPEVHWDSQPG) is disordered. Intrachain disulfides connect Cys-253/Cys-263 and Cys-292/Cys-310. One can recognise a Fibronectin type-III 2 domain in the interval 343–439 (QMEPPTLNLT…KWSEEYTWKT (97 aa)). N-linked (GlcNAc...) asparagine glycosylation is present at Asn-350. Residues 428–432 (WSKWS) carry the WSXWS motif motif. The chain crosses the membrane as a helical span at residues 442–463 (VMPTLWIVLILVFLILTLLLIL). Topologically, residues 464 to 896 (RFGCVSVYRT…WDNSQSGKVC (433 aa)) are cytoplasmic. Residues 477–485 (WKEKIPNPS) carry the Box 1 motif motif. Disordered regions lie at residues 543–620 (EDPN…GGSL) and 658–725 (CGSS…TGPL). Polar residues-rich tracts occupy residues 555–571 (PDTTPAASSESTEQLPN) and 658–668 (CGSSLETSGSP). Low complexity predominate over residues 716–725 (PVLTLPTGPL). A phosphoserine mark is found at Ser-752 and Ser-754. A Phosphotyrosine modification is found at Tyr-765. Positions 771-810 (SVSQAAKSPPGHPAPPVASSPTVIPGEPREEVGPASPHPE) are disordered.

This sequence belongs to the type I cytokine receptor family. Type 4 subfamily. In terms of assembly, heterodimer of an alpha and a beta subunit. The beta subunit is common to the IL3, IL5 and GM-CSF receptors. The signaling GM-CSF receptor complex is a dodecamer of two head-to-head hexamers of two alpha, two beta, and two ligand subunits. Interacts with TMEM102; this interaction occurs preferentially in the absence of CSF2. Interacts with FCER1G; this interaction is direct. Interacts with LYN. Post-translationally, may be phosphorylated by LYN.

It is found in the membrane. In terms of biological role, high affinity receptor for interleukin-3, interleukin-5 and granulocyte-macrophage colony-stimulating factor. This is Cytokine receptor common subunit beta (Csf2rb) from Mus musculus (Mouse).